The following is a 203-amino-acid chain: Large ribosomal subunit protein uL18 (203 aa).

It belongs to the universal ribosomal protein uL18 family. Part of the 50S ribosomal subunit. Contacts the 5S and 23S rRNAs.

Its function is as follows. This is one of the proteins that bind and probably mediate the attachment of the 5S RNA into the large ribosomal subunit, where it forms part of the central protuberance. The sequence is that of Large ribosomal subunit protein uL18 from Pyrococcus horikoshii (strain ATCC 700860 / DSM 12428 / JCM 9974 / NBRC 100139 / OT-3).